A 324-amino-acid polypeptide reads, in one-letter code: Putative glycosyltransferase R655 (324 aa).

This sequence belongs to the glycosyltransferase 25 family.

The sequence is that of Putative glycosyltransferase R655 from Acanthamoeba polyphaga (Amoeba).